A 298-amino-acid polypeptide reads, in one-letter code: Multifunctional dioxygenase ausE (298 aa).

Arg-72 and Gln-127 together coordinate substrate. Residues His-130 and Asp-132 each contribute to the Fe cation site. Thr-167 is a substrate binding site. His-214 provides a ligand contact to Fe cation. A substrate-binding site is contributed by Arg-226.

It belongs to the PhyH family. In terms of assembly, homodimer. It depends on Fe cation as a cofactor.

It catalyses the reaction preaustinoid A1 + 2-oxoglutarate + O2 = preaustinoid A2 + succinate + CO2 + H2O. It carries out the reaction preaustinoid A2 + 2-oxoglutarate + O2 = preaustinoid A3 + succinate + CO2 + H2O. The catalysed reaction is berkeleyone A + 2-oxoglutarate + O2 = preaustinoid A + succinate + CO2 + H2O. The protein operates within secondary metabolite biosynthesis; terpenoid biosynthesis. Functionally, multifunctional dioxygenase; part of the gene cluster that mediates the biosynthesis of calidodehydroaustin, a fungal meroterpenoid. The first step of the pathway is the synthesis of 3,5-dimethylorsellinic acid by the polyketide synthase ausA. 3,5-dimethylorsellinic acid is then prenylated by the polyprenyl transferase ausN. Further epoxidation by the FAD-dependent monooxygenase ausM and cyclization by the probable terpene cyclase ausL lead to the formation of protoaustinoid A. Protoaustinoid A is then oxidized to spiro-lactone preaustinoid A3 by the combined action of the FAD-binding monooxygenases ausB and ausC, and the dioxygenase ausE. Acid-catalyzed keto-rearrangement and ring contraction of the tetraketide portion of preaustinoid A3 by ausJ lead to the formation of preaustinoid A4. The aldo-keto reductase ausK, with the help of ausH, is involved in the next step by transforming preaustinoid A4 into isoaustinone which is in turn hydroxylated by the P450 monooxygenase ausI to form austinolide. The cytochrome P450 monooxygenase ausG modifies austinolide to austinol. Austinol is further acetylated to austin by the O-acetyltransferase ausP, which spontaneously changes to dehydroaustin. The cytochrome P450 monooxygenase ausR then converts dehydroaustin is into 7-dehydrodehydroaustin. The hydroxylation catalyzed by ausR permits the O-acetyltransferase ausQ to add an additional acetyl group to the molecule, leading to the formation of acetoxydehydroaustin. The short chain dehydrogenase ausT catalyzes the reduction of the double bond present between carbon atoms 1 and 2 to convert 7-dehydrodehydroaustin into 1,2-dihydro-7-hydroxydehydroaustin. AusQ catalyzes not only an acetylation reaction but also the addition of the PKS ausV diketide product to 1,2-dihydro-7-hydroxydehydroaustin, forming precalidodehydroaustin. Finally, the iron/alpha-ketoglutarate-dependent dioxygenase converts precalidodehydroaustin into calidodehydroaustin. This chain is Multifunctional dioxygenase ausE, found in Aspergillus calidoustus.